A 571-amino-acid chain; its full sequence is Gag-Pro polyprotein (571 aa).

A lipid anchor (N-myristoyl glycine; by host) is attached at Gly2. Positions 100 to 103 (PPPY) match the PPXY motif motif. Repeats lie at residues 342–362 (PPGP…CPTK) and 367–387 (PPGP…CPTL). 2 CCHC-type zinc fingers span residues 345–362 (PCYR…CPTK) and 370–387 (PCPI…CPTL). The active-site Protease; shared with dimeric partner is Thr453.

As to quaternary structure, homodimer; the homodimers are part of the immature particles. Interacts with human TSG101 and NEDD4; these interactions are essential for budding and release of viral particles. Homodimer; further assembles as homohexamers. In terms of processing, specific enzymatic cleavages by the viral protease yield mature proteins. The polyprotein is cleaved during and after budding, this process is termed maturation. The protease is autoproteolytically processed at its N- and C-termini. Myristoylated. Myristoylation of the matrix (MA) domain mediates the transport and binding of Gag polyproteins to the host plasma membrane and is required for the assembly of viral particles.

It is found in the virion. The matrix domain targets Gag, Gag-Pro and Gag-Pro-Pol polyproteins to the plasma membrane via a multipartite membrane binding signal, that includes its myristoylated N-terminus. In terms of biological role, matrix protein. Functionally, forms the spherical core of the virus that encapsulates the genomic RNA-nucleocapsid complex. Its function is as follows. Binds strongly to viral nucleic acids and promote their aggregation. Also destabilizes the nucleic acids duplexes via highly structured zinc-binding motifs. The aspartyl protease mediates proteolytic cleavages of Gag and Gag-Pol polyproteins during or shortly after the release of the virion from the plasma membrane. Cleavages take place as an ordered, step-wise cascade to yield mature proteins. This process is called maturation. Displays maximal activity during the budding process just prior to particle release from the cell. The protein is Gag-Pro polyprotein of Bovine leukemia virus (isolate Japanese BLV-1) (BLV).